Consider the following 556-residue polypeptide: MQRFCVCSPSSYRLNPITSMATGSGSLIWFRKGLRVHDNPALEYASKGSEFMYPVFVIDPHYMESDPSAFSPGSSRAGVNRIRFLLESLKDLDSSLKKLGSRLLVFKGEPGEVLVRCLQEWKVKRLCFEYDTDPYYQALDVKVKDYASSTGVEVFSPVSHTLFNPAHIIEKNGGKPPLSYQSFLKVAGEPSCAKSELVMSYSSLPPIGDIGNLGISEVPSLEELGYKDDEQADWTPFRGGESEALKRLTKSISDKAWVANFEKPKGDPSAFLKPATTVMSPYLKFGCLSSRYFYQCLQNIYKDVKKHTSPPVSLLGQLLWREFFYTTAFGTPNFDKMKGNRICKQIPWNEDHAMLAAWRDGKTGYPWIDAIMVQLLKWGWMHHLARHCVACFLTRGDLFIHWEQGRDVFERLLIDSDWAINNGNWMWLSCSSFFYQFNRIYSPISFGKKYDPDGKYIRHFLPVLKDMPKQYIYEPWTAPLSVQTKANCIVGKDYPKPMVLHDSASKECKRKMGEAYALNKKMDGKVDEENLRDLRRKLQKDEHEESKIRNQRPKLK.

A Photolyase/cryptochrome alpha/beta domain is found at 24–162; sequence SGSLIWFRKG…EVFSPVSHTL (139 aa). Glu-262 contacts phosphate. FAD contacts are provided by residues Lys-263, 276–280, 317–321, 380–383, Arg-386, 415–417, and Asn-421; these read TTVMS, QLLWR, WMHH, and DSD. Position 320 (Trp-320) interacts with DNA. The interval 382 to 387 is interaction with DNA; sequence HHLARH. Residue Trp-427 participates in DNA binding. The disordered stretch occupies residues 534-556; it reads LRRKLQKDEHEESKIRNQRPKLK. Residues 539-548 are compositionally biased toward basic and acidic residues; that stretch reads QKDEHEESKI.

The protein belongs to the DNA photolyase class-1 family. FAD serves as cofactor. Expressed in siliques, flowers and leaves. Not detected in roots.

It catalyses the reaction (6-4) photoproduct (in DNA) = 2 pyrimidine residues (in DNA).. Functionally, involved in repair of UV radiation-induced DNA damage. Catalyzes the photoreactivation of pyrimidine [6-4] pyrimidone photoproduct (6-4 products). Binds specifically to DNA containing 6-4 products and repairs these lesions in a visible light-dependent manner. Not required for repair of cyclobutane pyrimidine dimer (CPD). This chain is (6-4)DNA photolyase (UVR3), found in Arabidopsis thaliana (Mouse-ear cress).